We begin with the raw amino-acid sequence, 506 residues long: CTL-like protein DDB_G0269978 (506 aa).

N-linked (GlcNAc...) asparagine glycans are attached at residues asparagine 15 and asparagine 41. 12 helical membrane passes run 91-111 (LLYS…TVIA), 126-146 (LQGL…FLIW), 161-181 (SFFS…GNGW), 182-202 (YSWA…YFAF), 226-246 (TLLV…IWLF), 256-276 (SYWT…LYWT), 279-299 (VITY…YFFA), 323-343 (FGSI…QFIC), 345-367 (GFAR…ALIF), 371-393 (LYTF…CNSS), 416-436 (ITML…VTMI), and 447-467 (WLYV…DIIF).

The protein belongs to the CTL (choline transporter-like) family.

It localises to the membrane. The sequence is that of CTL-like protein DDB_G0269978 from Dictyostelium discoideum (Social amoeba).